A 426-amino-acid chain; its full sequence is Glutamyl-tRNA reductase (426 aa).

Substrate-binding positions include 51–54 (TCNR), S110, 115–117 (EAQ), and Q121. The active-site Nucleophile is C52. 190-195 (GAGEMA) is a binding site for NADP(+).

Belongs to the glutamyl-tRNA reductase family. In terms of assembly, homodimer.

It catalyses the reaction (S)-4-amino-5-oxopentanoate + tRNA(Glu) + NADP(+) = L-glutamyl-tRNA(Glu) + NADPH + H(+). It participates in porphyrin-containing compound metabolism; protoporphyrin-IX biosynthesis; 5-aminolevulinate from L-glutamyl-tRNA(Glu): step 1/2. Its function is as follows. Catalyzes the NADPH-dependent reduction of glutamyl-tRNA(Glu) to glutamate 1-semialdehyde (GSA). The polypeptide is Glutamyl-tRNA reductase (Desulfotalea psychrophila (strain LSv54 / DSM 12343)).